We begin with the raw amino-acid sequence, 224 residues long: Cysteine S-methyltransferase NleE (224 aa).

Residues 49 to 52 (GITR) form an interaction with host proteins TAB2, TAB3 and ZRANB3 region. Positions 92, 98, 107, 111, 204, and 208 each coordinate S-adenosyl-L-methionine.

This sequence belongs to the NleE/OspZ family. As to quaternary structure, monomer.

It is found in the secreted. The protein localises to the host nucleus. The catalysed reaction is L-cysteinyl-[protein] + S-adenosyl-L-methionine = S-methyl-L-cysteinyl-[protein] + S-adenosyl-L-homocysteine + H(+). Functionally, cysteine methyltransferase effector that inhibits host cell NF-kappa-B activation by preventing nuclear translocation of host protein RELA/p65. Acts by mediating cysteine methylation of host proteins TAB2 and TAB3: methylation of a conserved cysteine residue of the RanBP2-type zinc finger (NZF) of TAB2 and TAB3 disrupts zinc-binding, thereby inactivating the ubiquitin chain-binding activity of TAB2 and TAB3, leading to NF-kappa-B inactivation. Also mediates cysteine methylation of host protein ZRANB3, inactivating its ability to bind ubiquitin chains. The protein is Cysteine S-methyltransferase NleE of Escherichia coli O157:H7.